The following is a 179-amino-acid chain: Peptidyl-tRNA hydrolase (179 aa).

Residue tyrosine 14 coordinates tRNA. Residue histidine 19 is the Proton acceptor of the active site. TRNA-binding residues include tyrosine 61, asparagine 63, and asparagine 107.

Belongs to the PTH family. As to quaternary structure, monomer.

Its subcellular location is the cytoplasm. It catalyses the reaction an N-acyl-L-alpha-aminoacyl-tRNA + H2O = an N-acyl-L-amino acid + a tRNA + H(+). Its function is as follows. Hydrolyzes ribosome-free peptidyl-tRNAs (with 1 or more amino acids incorporated), which drop off the ribosome during protein synthesis, or as a result of ribosome stalling. In terms of biological role, catalyzes the release of premature peptidyl moieties from peptidyl-tRNA molecules trapped in stalled 50S ribosomal subunits, and thus maintains levels of free tRNAs and 50S ribosomes. The sequence is that of Peptidyl-tRNA hydrolase from Campylobacter lari (strain RM2100 / D67 / ATCC BAA-1060).